A 329-amino-acid chain; its full sequence is Prostaglandin reductase 1 (329 aa).

A Phosphothreonine modification is found at Thr18. Residues 152–155 (GAVG), Lys178, Tyr193, Asn217, 239–245 (CGAISQY), 270–272 (FIV), and Asn321 each bind NADP(+). Lys178 bears the N6-(2-hydroxyisobutyryl)lysine; alternate mark. Residue Lys178 is modified to N6-acetyllysine; alternate.

Belongs to the NADP-dependent oxidoreductase L4BD family. Monomer or homodimer.

It localises to the cytoplasm. The enzyme catalyses 13,14-dihydro-15-oxo-prostaglandin E1 + NADP(+) = 15-oxoprostaglandin E1 + NADPH + H(+). It carries out the reaction 13,14-dihydro-15-oxo-prostaglandin E2 + NADP(+) = 15-oxoprostaglandin E2 + NADPH + H(+). It catalyses the reaction 13,14-dihydro-15-oxo-prostaglandin F1alpha + NADP(+) = 15-oxoprostaglandin F1alpha + NADPH + H(+). The catalysed reaction is 13,14-dihydro-15-oxo-PGF2alpha + NADP(+) = 15-oxoprostaglandin F2alpha + NADPH + H(+). The enzyme catalyses leukotriene B4 + NADP(+) = 12-oxo-leukotriene B4 + NADPH + H(+). It carries out the reaction 20-hydroxy-leukotriene B4 + NADP(+) = 12-oxo-20-hydroxy-leukotriene B4 + NADPH + H(+). It catalyses the reaction 6-trans-leukotriene B4 + NADP(+) = 12-oxo-(5S)-hydroxy-(6E,8E,10E,14Z)-eicosatetraenoate + NADPH + H(+). The catalysed reaction is (5S,12S)-dihydroxy-(6E,10E,12E,14Z)-eicosatetraenoate + NADP(+) = 12-oxo-(5S)-hydroxy-(6E,8E,10E,14Z)-eicosatetraenoate + NADPH + H(+). The enzyme catalyses an n-alkanal + NADP(+) = an alk-2-enal + NADPH + H(+). It carries out the reaction hexanal + NADP(+) = (E)-hex-2-enal + NADPH + H(+). It catalyses the reaction octanal + NADP(+) = (2E)-octenal + NADPH + H(+). The catalysed reaction is decanal + NADP(+) = (2E)-decenal + NADPH + H(+). The enzyme catalyses dodecanal + NADP(+) = (2E)-dodecenal + NADPH + H(+). It carries out the reaction 4-hydroxynonanal + NADP(+) = (E)-4-hydroxynon-2-enal + NADPH + H(+). It catalyses the reaction pentan-2-one + NADP(+) = (E)-pent-3-en-2-one + NADPH + H(+). The catalysed reaction is nonan-2-one + NADP(+) = (3E)-nonen-2-one + NADPH + H(+). In terms of biological role, NAD(P)H-dependent oxidoreductase involved in metabolic inactivation of pro- and anti-inflammatory eicosanoids: prostaglandins (PG), leukotrienes (LT) and lipoxins (LX). Catalyzes with high efficiency the reduction of the 13,14 double bond of 15-oxoPGs, including 15-oxo-PGE1, 15-oxo-PGE2, 15-oxo-PGF1-alpha and 15-oxo-PGF2-alpha. Catalyzes with lower efficiency the oxidation of the hydroxyl group at C12 of LTB4 and its derivatives, converting them into biologically less active 12-oxo-LTB4 metabolites. Reduces 15-oxo-LXA4 to 13,14 dihydro-15-oxo-LXA4, enhancing neutrophil recruitment at the inflammatory site. Plays a role in metabolic detoxification of alkenals and ketones. Reduces alpha,beta-unsaturated alkenals and ketones, particularly those with medium-chain length, showing highest affinity toward (2E)-decenal and (3E)-3-nonen-2-one. May inactivate 4-hydroxy-2-nonenal, a cytotoxic lipid constituent of oxidized low-density lipoprotein particles. In Mus musculus (Mouse), this protein is Prostaglandin reductase 1 (Ptgr1).